Consider the following 356-residue polypeptide: Histidinol-phosphate aminotransferase (356 aa).

Position 214 is an N6-(pyridoxal phosphate)lysine (lysine 214).

It belongs to the class-II pyridoxal-phosphate-dependent aminotransferase family. Histidinol-phosphate aminotransferase subfamily. Homodimer. The cofactor is pyridoxal 5'-phosphate.

The catalysed reaction is L-histidinol phosphate + 2-oxoglutarate = 3-(imidazol-4-yl)-2-oxopropyl phosphate + L-glutamate. It functions in the pathway amino-acid biosynthesis; L-histidine biosynthesis; L-histidine from 5-phospho-alpha-D-ribose 1-diphosphate: step 7/9. This Escherichia coli O81 (strain ED1a) protein is Histidinol-phosphate aminotransferase.